A 340-amino-acid chain; its full sequence is 4-dimethylallyltryptophan N-methyltransferase easF (340 aa).

This sequence belongs to the methyltransferase superfamily. In terms of assembly, homodimer.

It carries out the reaction 4-(3-methylbut-2-enyl)-L-tryptophan + S-adenosyl-L-methionine = 4-(3-methylbut-2-enyl)-L-abrine + S-adenosyl-L-homocysteine + H(+). Its pathway is alkaloid biosynthesis; ergot alkaloid biosynthesis. Its function is as follows. 4-dimethylallyltryptophan N-methyltransferase; part of the gene cluster that mediates the biosynthesis of fungal ergot alkaloid. DmaW catalyzes the first step of ergot alkaloid biosynthesis by condensing dimethylallyl diphosphate (DMAP) and tryptophan to form 4-dimethylallyl-L-tryptophan. The second step is catalyzed by the methyltransferase easF that methylates 4-dimethylallyl-L-tryptophan in the presence of S-adenosyl-L-methionine, resulting in the formation of 4-dimethylallyl-L-abrine. The catalase easC and the FAD-dependent oxidoreductase easE then transform 4-dimethylallyl-L-abrine to chanoclavine-I which is further oxidized by easD in the presence of NAD(+), resulting in the formation of chanoclavine-I aldehyde. Chanoclavine-I aldehyde is the precursor of ergoamides and ergopeptines in Clavicipitaceae, and clavine-type alcaloids such as fumiclavine in Trichocomaceae. However, the metabolites downstream of chanoclavine-I aldehyde in Arthrodermataceae have not been identified yet. This Arthroderma benhamiae (strain ATCC MYA-4681 / CBS 112371) (Trichophyton mentagrophytes) protein is 4-dimethylallyltryptophan N-methyltransferase easF.